We begin with the raw amino-acid sequence, 923 residues long: Smoothelin (923 aa).

At Ala-2 the chain carries N-acetylalanine. A coiled-coil region spans residues 24-89 (LAERRRIRSA…ARLAGRLESM (66 aa)). The interval 134 to 456 (SRLPSSGPRE…GTGEPGGSMK (323 aa)) is disordered. 2 stretches are compositionally biased toward low complexity: residues 164–179 (QEQQ…TPED) and 192–205 (RAPP…PASP). The segment covering 237–252 (LPHPSEAPSPEPPMSP) has biased composition (pro residues). Polar residues-rich tracts occupy residues 272–285 (PSDT…FSNT) and 293–314 (TKSC…NREP). Residues Ser-299, Ser-301, Ser-304, and Ser-340 each carry the phosphoserine modification. Phosphothreonine is present on residues Thr-359 and Thr-372. A compositionally biased stretch (low complexity) spans 366–389 (PSLISTTPASSSSSNSSSPSPSDT). Ser-501, Ser-521, and Ser-574 each carry phosphoserine. 2 disordered regions span residues 542-578 (KMEP…PLSA) and 615-772 (QRKR…ARKA). Positions 601–628 (EERKLIRAALRELRQRKRDQRDKERERR) form a coiled coil. A compositionally biased stretch (basic and acidic residues) spans 615–638 (QRKRDQRDKERERRLREARARPGE). Residue Ser-641 is modified to Phosphoserine. Polar residues predominate over residues 674–687 (NDGTQTARTTTVES). The span at 697 to 721 (SSSSSTTTTTVQTKSFSSSSSSSSS) shows a compositional bias: low complexity. Ser-735 bears the Phosphoserine mark. Residues 744 to 756 (LERRQAEKKKELM) are compositionally biased toward basic and acidic residues. A Phosphoserine modification is found at Ser-798. One can recognise a Calponin-homology (CH) domain in the interval 805–912 (NSIKQMLLDW…YVQSLYNHLR (108 aa)).

This sequence belongs to the smoothelin family.

The protein localises to the cytoplasm. It is found in the cytoskeleton. Its function is as follows. Structural protein of the cytoskeleton. This is Smoothelin (Smtn) from Mus musculus (Mouse).